The chain runs to 355 residues: RLKTTVVLVPLLLLGWTGTLQGLPVLPEPLYPTQENFDLTRFVGTWHDVALTSSCPHMQRNRADAAIGKLVLEKDTGNKLKVTRTRLRHGTCVEMSGEYELTSTPGRIFYHIDRWDADVDAYVVHTNYDEYAIIIMSKQKTSGENSTSLKLYSRTMSVRDTVLDDFKTLVRHQGMSDDTIIIKQNKGDCIPGEQVEEAPSQPEPKRLRRQVLPTLALSDEEGSGDMSALFNDSEACKAAPETGPCFGFIQGFFYNSTSMRCELFTYGGCLGNQNNFVTVRECLQRCRTEAVCRLPMAPEPCTGQPTIWAFDFVTGSCMPYKDGICQANANQFYSRAECQEYCGVIKDDGELLTAS.

3-hydroxy-L-kynurenine contacts are provided by cysteine 55 and lysine 138. Residues cysteine 92 and cysteine 189 are joined by a disulfide bond. An N-linked (GlcNAc...) asparagine glycan is attached at asparagine 145. Residue lysine 150 coordinates 3-hydroxy-L-kynurenine. 2 N-linked (GlcNAc...) asparagine glycosylation sites follow: asparagine 231 and asparagine 255. 6 disulfide bridges follow: cysteine 236/cysteine 286, cysteine 245/cysteine 269, cysteine 261/cysteine 282, cysteine 292/cysteine 342, cysteine 301/cysteine 325, and cysteine 317/cysteine 338. BPTI/Kunitz inhibitor domains follow at residues 236–286 (CKAA…LQRC) and 292–342 (CRLP…QEYC).

It in the N-terminal section; belongs to the calycin superfamily. Lipocalin family. I-alpha-I plasma protease inhibitors are assembled from one or two heavy chains (H1, H2 or H3) and one light chain, bikunin. Inter-alpha-inhibitor (I-alpha-I) is composed of H1, H2 and bikunin, inter-alpha-like inhibitor (I-alpha-LI) of H2 and bikunin, and pre-alpha-inhibitor (P-alpha-I) of H3 and bikunin. In terms of processing, the precursor is proteolytically processed into two separately functioning proteins. Post-translationally, 3-hydroxykynurenine, an oxidized tryptophan metabolite that is common in biological fluids, reacts with Cys-55, Lys-138, and Lys-150 to form heterogeneous polycyclic chromophores including hydroxanthommatin. The reaction by alpha-1-microglobulin is autocatalytic. The chromophore can react with accessible cysteines forming non-reducible thioether cross-links with other molecules of alpha-1-microglobulin or with other proteins. In terms of tissue distribution, expressed by the liver and secreted in plasma.

The protein resides in the secreted. The chain is Protein AMBP from Pleuronectes platessa (European plaice).